A 275-amino-acid polypeptide reads, in one-letter code: Putative acyl-[acyl-carrier-protein] desaturase DesA2 (275 aa).

5 residues coordinate Fe cation: Glu-107, His-110, Glu-159, Glu-189, and His-192.

The protein belongs to the fatty acid desaturase type 2 family. As to quaternary structure, homodimer. Fe(2+) serves as cofactor.

Its pathway is lipid metabolism; fatty acid metabolism. Functionally, may be a desaturase involved in mycobacterial fatty acid biosynthesis. This is Putative acyl-[acyl-carrier-protein] desaturase DesA2 (desA2) from Mycobacterium tuberculosis (strain CDC 1551 / Oshkosh).